We begin with the raw amino-acid sequence, 338 residues long: DNA-directed RNA polymerase subunit alpha (338 aa).

Residues methionine 1–glutamate 234 form an alpha N-terminal domain (alpha-NTD) region. Residues phenylalanine 250–phenylalanine 338 are alpha C-terminal domain (alpha-CTD).

It belongs to the RNA polymerase alpha chain family. In terms of assembly, homodimer. The RNAP catalytic core consists of 2 alpha, 1 beta, 1 beta' and 1 omega subunit. When a sigma factor is associated with the core the holoenzyme is formed, which can initiate transcription.

The catalysed reaction is RNA(n) + a ribonucleoside 5'-triphosphate = RNA(n+1) + diphosphate. DNA-dependent RNA polymerase catalyzes the transcription of DNA into RNA using the four ribonucleoside triphosphates as substrates. The sequence is that of DNA-directed RNA polymerase subunit alpha from Cereibacter sphaeroides (strain ATCC 17025 / ATH 2.4.3) (Rhodobacter sphaeroides).